A 292-amino-acid polypeptide reads, in one-letter code: Hemin import ATP-binding protein HmuV (292 aa).

Residues 38–271 (LRADGIAVTR…ELLTRVYGHP (234 aa)) enclose the ABC transporter domain. 70-77 (GPNGAGKS) is a binding site for ATP.

It belongs to the ABC transporter superfamily. Heme (hemin) importer (TC 3.A.1.14.5) family. As to quaternary structure, the complex is composed of two ATP-binding proteins (HmuV), two transmembrane proteins (HmuU) and a solute-binding protein (HmuT).

The protein localises to the cell membrane. Part of the ABC transporter complex HmuTUV involved in hemin import. Responsible for energy coupling to the transport system. This chain is Hemin import ATP-binding protein HmuV, found in Rhodococcus jostii (strain RHA1).